A 397-amino-acid chain; its full sequence is Tyrosine--tRNA ligase (397 aa).

The short motif at 41–50 (PTAPDLHLGH) is the 'HIGH' region element. Residues 225-229 (KMSKS) carry the 'KMSKS' region motif. Residue lysine 228 coordinates ATP. Residues 340-396 (AFLADSGLAGSRGEAKRLIKQGALSLDGEKLDDPNTPLTAGEYVVRLGKKRFLRLIV) form the S4 RNA-binding domain.

Belongs to the class-I aminoacyl-tRNA synthetase family. TyrS type 2 subfamily. Homodimer.

It is found in the cytoplasm. It carries out the reaction tRNA(Tyr) + L-tyrosine + ATP = L-tyrosyl-tRNA(Tyr) + AMP + diphosphate + H(+). Catalyzes the attachment of tyrosine to tRNA(Tyr) in a two-step reaction: tyrosine is first activated by ATP to form Tyr-AMP and then transferred to the acceptor end of tRNA(Tyr). This is Tyrosine--tRNA ligase from Oleidesulfovibrio alaskensis (strain ATCC BAA-1058 / DSM 17464 / G20) (Desulfovibrio alaskensis).